A 318-amino-acid polypeptide reads, in one-letter code: Ankyrin repeat and SOCS box protein 7 (318 aa).

ANK repeat units lie at residues 13–42 (QEEL…SPNG), 46–75 (NGWT…DPTV), 80–109 (GGFT…RSDI), 116–145 (DGWT…EVDP), 149–178 (KGTT…NIDI), 180–208 (NGFL…DTDL), and 213–242 (DGQT…DTNT). Residues 265–318 (LDFLQEVTRQPRNLQDLCRIKIRQCIGLQNLKLLDELPIAKVMKDYLKHKFDDI) form the SOCS box domain.

The protein belongs to the ankyrin SOCS box (ASB) family. Interacts with CUL5. Interacts with RNF7. Interacts with PSRC1.

It functions in the pathway protein modification; protein ubiquitination. Functionally, probable substrate-recognition component of a SCF-like ECS (Elongin-Cullin-SOCS-box protein) E3 ubiquitin-protein ligase complex which mediates the ubiquitination and subsequent proteasomal degradation of target proteins. Plays a role in spindle dynamics and genome integrity by targeting the mitotic progression protein PSRC1 for proteasomal degradation in a cell cycle-dependent manner. Also participates in meiosis by mediating the proper attachment between kinetochores and microtubules. The chain is Ankyrin repeat and SOCS box protein 7 (ASB7) from Macaca fascicularis (Crab-eating macaque).